Consider the following 372-residue polypeptide: Anhydro-N-acetylmuramic acid kinase (372 aa).

14–21 is a binding site for ATP; the sequence is GTSLDGVD.

The protein belongs to the anhydro-N-acetylmuramic acid kinase family.

It catalyses the reaction 1,6-anhydro-N-acetyl-beta-muramate + ATP + H2O = N-acetyl-D-muramate 6-phosphate + ADP + H(+). The protein operates within amino-sugar metabolism; 1,6-anhydro-N-acetylmuramate degradation. It participates in cell wall biogenesis; peptidoglycan recycling. In terms of biological role, catalyzes the specific phosphorylation of 1,6-anhydro-N-acetylmuramic acid (anhMurNAc) with the simultaneous cleavage of the 1,6-anhydro ring, generating MurNAc-6-P. Is required for the utilization of anhMurNAc either imported from the medium or derived from its own cell wall murein, and thus plays a role in cell wall recycling. The sequence is that of Anhydro-N-acetylmuramic acid kinase from Photorhabdus laumondii subsp. laumondii (strain DSM 15139 / CIP 105565 / TT01) (Photorhabdus luminescens subsp. laumondii).